The primary structure comprises 99 residues: Large ribosomal subunit protein uL23 (99 aa).

Belongs to the universal ribosomal protein uL23 family. In terms of assembly, part of the 50S ribosomal subunit. Contacts protein L29, and trigger factor when it is bound to the ribosome.

Functionally, one of the early assembly proteins it binds 23S rRNA. One of the proteins that surrounds the polypeptide exit tunnel on the outside of the ribosome. Forms the main docking site for trigger factor binding to the ribosome. This is Large ribosomal subunit protein uL23 from Blochmanniella floridana.